Consider the following 328-residue polypeptide: Probable cell division protein WhiA (328 aa).

Positions 275–308 (SLEELGQLASPPMTKDAVAGRIRRLLSMADKRAE) form a DNA-binding region, H-T-H motif.

The protein belongs to the WhiA family.

Involved in cell division and chromosome segregation. In Corynebacterium urealyticum (strain ATCC 43042 / DSM 7109), this protein is Probable cell division protein WhiA.